Reading from the N-terminus, the 351-residue chain is sn-glycerol-3-phosphate import ATP-binding protein UgpC (351 aa).

The ABC transporter domain occupies 4–235; sequence IVLDNVRKSY…PASTFVATFI (232 aa). 37–44 lines the ATP pocket; sequence GPSGCGKS.

This sequence belongs to the ABC transporter superfamily. sn-glycerol-3-phosphate importer (TC 3.A.1.1.3) family. As to quaternary structure, the complex is composed of two ATP-binding proteins (UgpC), two transmembrane proteins (UgpA and UgpE) and a solute-binding protein (UgpB).

Its subcellular location is the cell inner membrane. It carries out the reaction sn-glycerol 3-phosphate(out) + ATP + H2O = sn-glycerol 3-phosphate(in) + ADP + phosphate + H(+). Part of the ABC transporter complex UgpBAEC involved in sn-glycerol-3-phosphate (G3P) import. Responsible for energy coupling to the transport system. This Brucella abortus (strain 2308) protein is sn-glycerol-3-phosphate import ATP-binding protein UgpC.